A 563-amino-acid chain; its full sequence is MSEITLGKYLFERLSQVNCNTVFGLPGDFNLSLLDKLYEVKGMRWAGNANELNAAYAADGYARIKGMSCIITTFGVGELSALNGIAGSYAEHVGVLHVVGVPSISSQAKQLLLHHTLGNGDFTVFHRMSANISETTAMITDIANAPAEIDRCIRTTYTTQRPVYLGLPANLVDLNVPAKLLETPIDLSLKPNDAEAEAEVVRTVVELIKDAKNPVILADACASRHDVKAETKKLMDLTQFPVYVTPMGKGAIDEQHPRYGGVYVGTLSRPEVKKAVESADLILSIGALLSDFNTGSFSYSYKTKNIVEFHSDHIKIRNATFPGVQMKFALQKLLDAIPEVVKDYKPVAVPARVPITKSTPANTPMKQEWMWNHLGNFLREGDIVIAETGTSAFGINQTTFPTDVYAIVQVLWGSIGFTVGALLGATMAAEELDPKKRVILFIGDGSLQLTVQEISTMIRWGLKPYIFVLNNNGYTIEKLIHGPHAEYNEIQGWDHLALLPTFGARNYETHRVATTGEWEKLTQDKDFQDNSKIRMIEVMLPVFDAPQNLVKQAQLTAATNAKQ.

The pyruvate site is built by Asp28, His115, Tyr157, and Arg224. Residues Thr390 and 413–415 contribute to the thiamine diphosphate site; that span reads GSI. Asp444 is a binding site for Mg(2+). Residues 445–446 and 471–476 each bind thiamine diphosphate; these read GS and NNGYTI. The Mg(2+) site is built by Asn471 and Gly473. Residue Glu477 coordinates pyruvate.

It belongs to the TPP enzyme family. As to quaternary structure, homotetramer. Mg(2+) serves as cofactor. Thiamine diphosphate is required as a cofactor.

Its subcellular location is the cytoplasm. The protein localises to the nucleus. The catalysed reaction is pyruvate + H(+) = acetaldehyde + CO2. It carries out the reaction 3-methyl-2-oxobutanoate + H(+) = 2-methylpropanal + CO2. The enzyme catalyses (S)-3-methyl-2-oxopentanoate + H(+) = 2-methylbutanal + CO2. It catalyses the reaction indole-3-pyruvate + H(+) = indole-3-acetaldehyde + CO2. The catalysed reaction is 3-phenylpyruvate + H(+) = 2-phenylacetaldehyde + CO2. It carries out the reaction 2-oxobutanoate + H(+) = propanal + CO2. The enzyme catalyses 2-oxopentanoate + H(+) = butanal + CO2. It catalyses the reaction 2 acetaldehyde = acetoin. The catalysed reaction is acetaldehyde + pyruvate + H(+) = acetoin + CO2. Its pathway is fermentation; ethanol fermentation. It functions in the pathway amino-acid degradation; Ehrlich pathway. With respect to regulation, allosterically activated by its substrate, pyruvate. Second most abundant of three pyruvate decarboxylases (PDC1, PDC5, PDC6) implicated in the nonoxidative conversion of pyruvate to acetaldehyde and carbon dioxide during alcoholic fermentation. Most of the produced acetaldehyde is subsequently reduced to ethanol, but some is required for cytosolic acetyl-CoA production for biosynthetic pathways. The enzyme is also one of five 2-oxo acid decarboxylases (PDC1, PDC5, PDC6, ARO10, and THI3) able to decarboxylate more complex 2-oxo acids (alpha-keto-acids) than pyruvate, which seem mainly involved in amino acid catabolism. Here the enzyme catalyzes the decarboxylation of amino acids, which, in a first step, have been transaminated to the corresponding 2-oxo acids. In a third step, the resulting aldehydes are reduced to alcohols, collectively referred to as fusel oils or alcohols. Its preferred substrates are the transaminated amino acids derived from threonine (2-oxobutanoate), norvaline (2-oxopentanoate), valine (3-methyl-2-oxobutanoate, also alpha-keto-isovalerate), isoleucine ((3S)-3-methyl-2-oxopentanoate, also alpha-keto-beta-methylvalerate), phenylalanine (phenylpyruvate), and tryptophan (3-(indol-3-yl)pyruvate), whereas transaminated leucine is no substrate. In a side-reaction the carbanionic intermediate (or active aldehyde) generated by decarboxylation or by activation of an aldehyde can react with an aldehyde via condensation (or carboligation) yielding a 2-hydroxy ketone, collectively called acyloins. This Saccharomyces cerevisiae (strain ATCC 204508 / S288c) (Baker's yeast) protein is Pyruvate decarboxylase isozyme 2 (PDC5).